Consider the following 154-residue polypeptide: Universal stress protein Sll1388 (154 aa).

Belongs to the universal stress protein A family.

This Synechocystis sp. (strain ATCC 27184 / PCC 6803 / Kazusa) protein is Universal stress protein Sll1388.